A 491-amino-acid chain; its full sequence is Acetyl-coenzyme A carboxylase carboxyl transferase subunit beta, chloroplastic (491 aa).

The disordered stretch occupies residues 26 to 49 (ARPRPIGNTNGSQDPSINDRDKNG). The span at 32-41 (GNTNGSQDPS) shows a compositional bias: polar residues. The CoA carboxyltransferase N-terminal domain maps to 222–491 (LWVQCDNCYG…PLNHNSQVKR (270 aa)). Zn(2+) is bound by residues Cys-226, Cys-229, Cys-245, and Cys-248. The C4-type zinc-finger motif lies at 226-248 (CDNCYGLNYKKIFSSKMNICEQC).

Belongs to the AccD/PCCB family. In terms of assembly, acetyl-CoA carboxylase is a heterohexamer composed of biotin carboxyl carrier protein, biotin carboxylase and 2 subunits each of ACCase subunit alpha and ACCase plastid-coded subunit beta (accD). It depends on Zn(2+) as a cofactor.

Its subcellular location is the plastid. It is found in the chloroplast stroma. The enzyme catalyses N(6)-carboxybiotinyl-L-lysyl-[protein] + acetyl-CoA = N(6)-biotinyl-L-lysyl-[protein] + malonyl-CoA. It functions in the pathway lipid metabolism; malonyl-CoA biosynthesis; malonyl-CoA from acetyl-CoA: step 1/1. Functionally, component of the acetyl coenzyme A carboxylase (ACC) complex. Biotin carboxylase (BC) catalyzes the carboxylation of biotin on its carrier protein (BCCP) and then the CO(2) group is transferred by the transcarboxylase to acetyl-CoA to form malonyl-CoA. The protein is Acetyl-coenzyme A carboxylase carboxyl transferase subunit beta, chloroplastic of Ceratophyllum demersum (Rigid hornwort).